The primary structure comprises 208 residues: Superoxide dismutase [Mn] 2 (208 aa).

Positions 28, 83, 165, and 169 each coordinate Mn(2+).

This sequence belongs to the iron/manganese superoxide dismutase family. In terms of assembly, homodimer. Requires Mn(2+) as cofactor.

The enzyme catalyses 2 superoxide + 2 H(+) = H2O2 + O2. Functionally, destroys superoxide anion radicals which are normally produced within the cells and which are toxic to biological systems. The chain is Superoxide dismutase [Mn] 2 (sodA2) from Bacillus anthracis.